The sequence spans 384 residues: MMEAVHFGAGNIGRGFIGETLAANGFKINFVDVNETIINALNQRGEYTITLAAPGEKKIHVDNVDGLNNAKDPEAVVKAIAQADLVTTAIGPKILPIIAPLIAQGLQARDAANNHQALDVIACENMIGGSQSLKKSVYEHLDDAGKTFADTYVGFPNAAVDRIVPQQKHDDPLAVSVEDFKEWVVDESQMKNKDLKLKTVDYVPDLEPYIERKLFSVNTGHATTAYTGKYLGYTTIGDAIKDPKVFNQAKGALAETRSLLLSEFKNFDEKDLENYQNRVLQRFQNPYISDDISRVARTPIRKLGYDERFIRPIRELKERGLNYSVLMDTVGMMFHYVEPNDAEAVKLQAMLKDQPLVDVIKEVTGLKDAGLIDEVEASVKSKDR.

4–15 (AVHFGAGNIGRG) is an NAD(+) binding site.

Belongs to the mannitol dehydrogenase family.

It catalyses the reaction D-mannitol 1-phosphate + NAD(+) = beta-D-fructose 6-phosphate + NADH + H(+). The polypeptide is Mannitol-1-phosphate 5-dehydrogenase (Lacticaseibacillus paracasei (strain ATCC 334 / BCRC 17002 / CCUG 31169 / CIP 107868 / KCTC 3260 / NRRL B-441) (Lactobacillus paracasei)).